We begin with the raw amino-acid sequence, 613 residues long: Threonine--tRNA ligase (613 aa).

The segment at 1-147 (MRLLLIHARS…TITPQESAPQ (147 aa)) is editing domain. Catalytic stretches follow at residues 199–495 (PRYI…PALP) and 200–495 (RYID…PALP). Zn(2+) contacts are provided by C292, H343, and H464.

This sequence belongs to the class-II aminoacyl-tRNA synthetase family. As to quaternary structure, homodimer. Zn(2+) is required as a cofactor.

It localises to the cytoplasm. It catalyses the reaction tRNA(Thr) + L-threonine + ATP = L-threonyl-tRNA(Thr) + AMP + diphosphate + H(+). Catalyzes the attachment of threonine to tRNA(Thr) in a two-step reaction: L-threonine is first activated by ATP to form Thr-AMP and then transferred to the acceptor end of tRNA(Thr). Also edits incorrectly charged L-seryl-tRNA(Thr). The protein is Threonine--tRNA ligase of Caldivirga maquilingensis (strain ATCC 700844 / DSM 13496 / JCM 10307 / IC-167).